The chain runs to 156 residues: Ribosome maturation factor RimP (156 aa).

It belongs to the RimP family.

It localises to the cytoplasm. In terms of biological role, required for maturation of 30S ribosomal subunits. The sequence is that of Ribosome maturation factor RimP from Exiguobacterium sp. (strain ATCC BAA-1283 / AT1b).